Reading from the N-terminus, the 137-residue chain is Protein Turandot X (137 aa).

An N-terminal signal peptide occupies residues 1-24; that stretch reads MRVPVFQLSCLLGLIVCLLCSVKA.

The protein belongs to the Turandot family.

Its subcellular location is the secreted. A humoral factor that may play a role in stress tolerance. This chain is Protein Turandot X, found in Drosophila pseudoobscura pseudoobscura (Fruit fly).